We begin with the raw amino-acid sequence, 319 residues long: Phospho-N-acetylmuramoyl-pentapeptide-transferase (319 aa).

Transmembrane regions (helical) follow at residues 1 to 21, 53 to 73, 77 to 97, 117 to 137, 140 to 160, 172 to 192, 195 to 215, 221 to 241, 249 to 269, and 298 to 318; these read MSILVAGLTLVSAFLITFLLM, TMGGLLFILSAALTCGWVGAW, LNGTLGALLFTLIAYGLIGMW, FLAQVVGAMVFAVIYQHEGFQ, FGLTDWGWFYALFIIFWMVGF, GLVTGLATISFAAYLVLALVQ, TEVALFCLAMIGTLLGFFPFN, IFMGDMGSLALGASLAAVALV, LIIGIVYVLETLSVILQVAYF, and GVFWLVGLIAGALTVATILFL.

Belongs to the glycosyltransferase 4 family. MraY subfamily. The cofactor is Mg(2+).

Its subcellular location is the cell membrane. The catalysed reaction is UDP-N-acetyl-alpha-D-muramoyl-L-alanyl-gamma-D-glutamyl-L-lysyl-D-alanyl-D-alanine + di-trans,octa-cis-undecaprenyl phosphate = Mur2Ac(oyl-L-Ala-gamma-D-Glu-L-Lys-D-Ala-D-Ala)-di-trans,octa-cis-undecaprenyl diphosphate + UMP. Its pathway is cell wall biogenesis; peptidoglycan biosynthesis. In terms of biological role, catalyzes the initial step of the lipid cycle reactions in the biosynthesis of the cell wall peptidoglycan: transfers peptidoglycan precursor phospho-MurNAc-pentapeptide from UDP-MurNAc-pentapeptide onto the lipid carrier undecaprenyl phosphate, yielding undecaprenyl-pyrophosphoryl-MurNAc-pentapeptide, known as lipid I. This chain is Phospho-N-acetylmuramoyl-pentapeptide-transferase, found in Limosilactobacillus fermentum (strain NBRC 3956 / LMG 18251) (Lactobacillus fermentum).